Here is a 513-residue protein sequence, read N- to C-terminus: ATP synthase subunit alpha (513 aa).

169-176 (GDRQIGKT) lines the ATP pocket.

This sequence belongs to the ATPase alpha/beta chains family. As to quaternary structure, F-type ATPases have 2 components, CF(1) - the catalytic core - and CF(0) - the membrane proton channel. CF(1) has five subunits: alpha(3), beta(3), gamma(1), delta(1), epsilon(1). CF(0) has three main subunits: a(1), b(2) and c(9-12). The alpha and beta chains form an alternating ring which encloses part of the gamma chain. CF(1) is attached to CF(0) by a central stalk formed by the gamma and epsilon chains, while a peripheral stalk is formed by the delta and b chains.

It localises to the cell inner membrane. It carries out the reaction ATP + H2O + 4 H(+)(in) = ADP + phosphate + 5 H(+)(out). Its function is as follows. Produces ATP from ADP in the presence of a proton gradient across the membrane. The alpha chain is a regulatory subunit. The protein is ATP synthase subunit alpha of Francisella tularensis subsp. tularensis (strain WY96-3418).